A 259-amino-acid chain; its full sequence is Succinate dehydrogenase iron-sulfur subunit (259 aa).

The region spanning 28-119 (RRFNIYRWDP…DVNIYPLPHM (92 aa)) is the 2Fe-2S ferredoxin-type domain. [2Fe-2S] cluster contacts are provided by Cys-80, Cys-85, and Cys-100. The 4Fe-4S ferredoxin-type domain maps to 160–190 (DRKKLDGLYECVMCASCSTACPSYWWNGDRY). [4Fe-4S] cluster contacts are provided by Cys-170, Cys-173, and Cys-176. Cys-180 serves as a coordination point for [3Fe-4S] cluster. Trp-185 provides a ligand contact to a ubiquinone. [3Fe-4S] cluster-binding residues include Cys-227 and Cys-233. Cys-237 serves as a coordination point for [4Fe-4S] cluster.

The protein belongs to the succinate dehydrogenase/fumarate reductase iron-sulfur protein family. In terms of assembly, part of an enzyme complex containing four subunits: a flavoprotein, an iron-sulfur, cytochrome b-556, and a hydrophobic anchor protein. The cofactor is [2Fe-2S] cluster. [3Fe-4S] cluster serves as cofactor. Requires [4Fe-4S] cluster as cofactor.

It catalyses the reaction a quinone + succinate = fumarate + a quinol. Its pathway is carbohydrate metabolism; tricarboxylic acid cycle; fumarate from succinate (bacterial route): step 1/1. The polypeptide is Succinate dehydrogenase iron-sulfur subunit (sdhB) (Paracoccus denitrificans).